The primary structure comprises 336 residues: MKVKGILPGLVTSLVIAIISQGLAQFVPALGAATIAILLGIIGGNTFLKQPQLGRGTKFAESKLLEYSVMLLGATMTVQTIGKIGGFGVLFILCQMTITIVGALWLGRKLGFSQSVRMLMAGGNAVCGSSAIASIAPVIDADEDDKGTVITLVNLMGTVLMLTLPVLGMAVFGGSVILKGALIGGTLQSVGQVVAAASMINQTTVQFATIFKIMRIMMLVVVVLIFGRLHQRTIENELAEDAVVSGNGNGHWLPWYVAGFLILCALNSLISLPAIIGATAHTISSWFEIIALAAIGLRLNLVNFMKAGKRLALYGLGVGTIQVVSALILITLLLQH.

A run of 9 helical transmembrane segments spans residues 5–22 (GILP…ISQG), 26–48 (FVPA…NTFL), 84–106 (IGGF…ALWL), 116–138 (VRML…IAPV), 150–172 (ITLV…MAVF), 204–226 (TVQF…VLIF), 255–277 (WYVA…AIIG), 282–304 (TISS…LVNF), and 311–333 (LALY…ITLL).

It belongs to the UPF0324 family.

The protein resides in the cell membrane. This is UPF0324 membrane protein lp_2841 from Lactiplantibacillus plantarum (strain ATCC BAA-793 / NCIMB 8826 / WCFS1) (Lactobacillus plantarum).